We begin with the raw amino-acid sequence, 214 residues long: Thymidylate kinase (214 aa).

10–17 is a binding site for ATP; sequence GGEGAGKS.

The protein belongs to the thymidylate kinase family.

The catalysed reaction is dTMP + ATP = dTDP + ADP. Functionally, phosphorylation of dTMP to form dTDP in both de novo and salvage pathways of dTTP synthesis. In Brucella suis biovar 1 (strain 1330), this protein is Thymidylate kinase.